A 550-amino-acid polypeptide reads, in one-letter code: Membrane protein insertase YidC (550 aa).

The helical transmembrane segment at 3–23 (IKRTVLWVIFFMSAVMLFDNW) threads the bilayer. Residues 34–73 (FPSATQTKTAAPAAPGSSTTASQPTDLPQTTAAAPGSTTP) are disordered. Over residues 35–73 (PSATQTKTAAPAAPGSSTTASQPTDLPQTTAAAPGSTTP) the composition is skewed to low complexity. A run of 4 helical transmembrane segments spans residues 363-383 (WGWA…PLSA), 429-449 (FGGC…YWVL), 472-492 (PYFI…KLNP), and 503-523 (MMFM…GLVL).

The protein belongs to the OXA1/ALB3/YidC family. Type 1 subfamily. In terms of assembly, interacts with the Sec translocase complex via SecD. Specifically interacts with transmembrane segments of nascent integral membrane proteins during membrane integration.

The protein localises to the cell inner membrane. Required for the insertion and/or proper folding and/or complex formation of integral membrane proteins into the membrane. Involved in integration of membrane proteins that insert both dependently and independently of the Sec translocase complex, as well as at least some lipoproteins. Aids folding of multispanning membrane proteins. This Paraburkholderia phymatum (strain DSM 17167 / CIP 108236 / LMG 21445 / STM815) (Burkholderia phymatum) protein is Membrane protein insertase YidC.